The chain runs to 235 residues: Serine protease SplA (235 aa).

The signal sequence occupies residues 1–35 (MNKNVMVKGLTALDILTSLGCAENISDQPHSIAKA). Active-site charge relay system residues include His74, Asp113, and Ser189.

The protein belongs to the peptidase S1B family.

It is found in the secreted. This chain is Serine protease SplA (splA), found in Staphylococcus aureus.